The primary structure comprises 222 residues: Coiled-coil domain-containing protein 70 (222 aa).

2 coiled-coil regions span residues 34–62 (LQEEKAFREEMRHFREKIEDFREEMWNFR) and 129–188 (NALW…KAAW).

The protein is Coiled-coil domain-containing protein 70 (CCDC70) of Bos taurus (Bovine).